The following is a 410-amino-acid chain: F-box/WD repeat-containing protein 4 (410 aa).

The F-box domain occupies 23–69; it reads GPALWRLPEELLLLICSYLDTRALGRLAQVCRWLRRFTSCDLLWRPI. WD repeat units lie at residues 159–196, 198–235, 289–327, and 333–372; these read GHDE…TVKY, AHEQ…LGQC, PPGA…RKCV, and PHDS…CLHA.

In terms of assembly, part of a SCF (SKP1-cullin-F-box) protein ligase complex. Interacts with POUF51.

Functionally, probably recognizes and binds to some phosphorylated proteins and promotes their ubiquitination and degradation. Likely to be involved in key signaling pathways crucial for normal limb development. May participate in Wnt signaling. The polypeptide is F-box/WD repeat-containing protein 4 (Fbxw4) (Mus musculus (Mouse)).